Reading from the N-terminus, the 762-residue chain is Molybdenum cofactor sulfurase 2 (762 aa).

K234 carries the post-translational modification N6-(pyridoxal phosphate)lysine. C400 is an active-site residue. The MOSC domain occupies 590 to 738 (AWISKALRMP…LECGSILEPV (149 aa)).

It belongs to the class-V pyridoxal-phosphate-dependent aminotransferase family. MOCOS subfamily. The cofactor is pyridoxal 5'-phosphate.

The catalysed reaction is Mo-molybdopterin + L-cysteine + AH2 = thio-Mo-molybdopterin + L-alanine + A + H2O. In terms of biological role, sulfurates the molybdenum cofactor. Sulfation of molybdenum is essential for xanthine dehydrogenase (XDH) and aldehyde oxidase (ADO) enzymes in which molybdenum cofactor is liganded by 1 oxygen and 1 sulfur atom in active form. The sequence is that of Molybdenum cofactor sulfurase 2 from Aedes aegypti (Yellowfever mosquito).